The chain runs to 227 residues: Phage shock protein A homolog (227 aa).

Positions 33-125 (LRNMNSDLAK…AQMRKMHDKL (93 aa)) form a coiled coil. A disordered region spans residues 191-211 (SAPQDDMADLSAKYDTGGSSQ).

This sequence belongs to the PspA/Vipp/IM30 family.

The protein is Phage shock protein A homolog (ydjF) of Bacillus subtilis (strain 168).